A 359-amino-acid polypeptide reads, in one-letter code: 3-dehydroquinate synthase (359 aa).

NAD(+)-binding positions include aspartate 69 to lysine 74, glycine 103 to aspartate 107, threonine 127 to threonine 128, lysine 140, lysine 149, and threonine 167 to threonine 170. Residues glutamate 182, histidine 245, and histidine 262 each contribute to the Zn(2+) site.

Belongs to the sugar phosphate cyclases superfamily. Dehydroquinate synthase family. Co(2+) is required as a cofactor. Zn(2+) serves as cofactor. Requires NAD(+) as cofactor.

The protein resides in the cytoplasm. It catalyses the reaction 7-phospho-2-dehydro-3-deoxy-D-arabino-heptonate = 3-dehydroquinate + phosphate. Its pathway is metabolic intermediate biosynthesis; chorismate biosynthesis; chorismate from D-erythrose 4-phosphate and phosphoenolpyruvate: step 2/7. Its function is as follows. Catalyzes the conversion of 3-deoxy-D-arabino-heptulosonate 7-phosphate (DAHP) to dehydroquinate (DHQ). The polypeptide is 3-dehydroquinate synthase (Nitrosococcus oceani (strain ATCC 19707 / BCRC 17464 / JCM 30415 / NCIMB 11848 / C-107)).